A 472-amino-acid polypeptide reads, in one-letter code: MNAVANAASFDDHKVADLSLAGWGRKEIAIAETEMPGLMAIREEYRAAQPLKGARIAGSLHMTIQTAVLIETLVALGAEVRWASCNIFSTQDHAAAAIAADGIPVFAYKGESLDDYWEYTHRILEWPGDVGPNMILDDGGDATLLVTLGARAEKDASLLANPTCEEEEVLFAAIRKRLAAKPGWYSRIQAGIKGVTEETTTGVHRLYEMQAKGRLPFPAINVNDSVTKSKFDNLYGCRESLVDGIKRATDVMIAGKIAVVLGYGDVGKGCAQSLRGLGATVWITEIDPICALQAAMEGYRVVTMDEACDKADIFVTATGNVGVITHDHMVKMKDQAIVCNIGHFDSEIEVAAMRQYTWENIKPQVDHIVLPNGRRIILLAEGRLVNLGCATGHPSFVMSNSFTNQTLAQIELFCHGAKYENKVYVLPKHLDEKVARLHLKKIGARLTELSDEQAAYIGVPKEGPYKPDHYRY.

Threonine 63, aspartate 138, and glutamate 198 together coordinate substrate. 199–201 (TTT) contacts NAD(+). Substrate-binding residues include lysine 228 and aspartate 232. NAD(+) contacts are provided by residues asparagine 233, 262–267 (GYGDVG), glutamate 285, asparagine 320, 341–343 (IGH), and asparagine 386.

Belongs to the adenosylhomocysteinase family. NAD(+) is required as a cofactor.

The protein resides in the cytoplasm. It carries out the reaction S-adenosyl-L-homocysteine + H2O = L-homocysteine + adenosine. Its pathway is amino-acid biosynthesis; L-homocysteine biosynthesis; L-homocysteine from S-adenosyl-L-homocysteine: step 1/1. Functionally, may play a key role in the regulation of the intracellular concentration of adenosylhomocysteine. This Methylococcus capsulatus (strain ATCC 33009 / NCIMB 11132 / Bath) protein is Adenosylhomocysteinase.